Reading from the N-terminus, the 191-residue chain is Thymidylate kinase (191 aa).

7 to 14 (GIDTCGKS) contributes to the ATP binding site.

The protein belongs to the thymidylate kinase family.

It catalyses the reaction dTMP + ATP = dTDP + ADP. Phosphorylation of dTMP to form dTDP in both de novo and salvage pathways of dTTP synthesis. In Sulfurovum sp. (strain NBC37-1), this protein is Thymidylate kinase.